The sequence spans 419 residues: Chaperone protein dnaJ 2 (419 aa).

Positions 14–75 (KFYEILGVPK…EKREIYDQYG (62 aa)) constitute a J domain. The CR-type zinc-finger motif lies at 136–220 (GTTKKLSLSR…CKGEKVVSEK (85 aa)). Zn(2+)-binding residues include Cys149, Cys152, Cys165, Cys168, Cys192, Cys195, Cys208, and Cys211. 4 CXXCXGXG motif repeats span residues 149–156 (CSKCNGKG), 165–172 (CGGCQGSG), 192–199 (CNDCKGTG), and 208–215 (CPQCKGEK). Basic and acidic residues predominate over residues 378 to 391 (TTLHDVNIEDEMKR). The tract at residues 378–419 (TTLHDVNIEDEMKRKAQAQREAYDDDEEDHPGGAQRVQCAQQ) is disordered. Cys416 carries the post-translational modification Cysteine methyl ester. Cys416 carries S-farnesyl cysteine lipidation. A propeptide spans 417 to 419 (AQQ) (removed in mature form).

This sequence belongs to the DnaJ family. A/I subfamily. As to quaternary structure, homodimer. Zn(2+) serves as cofactor. In terms of processing, farnesylated. Expressed in both etiolated and light-grown tissues.

The protein resides in the membrane. Its function is as follows. Plays a continuous role in plant development probably in the structural organization of compartments. The sequence is that of Chaperone protein dnaJ 2 (ATJ2) from Arabidopsis thaliana (Mouse-ear cress).